Reading from the N-terminus, the 43-residue chain is Protein PsbN (43 aa).

Residues 7 to 29 (VTIFLSGLLVSFTGYALYTAFGQ) form a helical membrane-spanning segment.

It belongs to the PsbN family.

The protein resides in the plastid. Its subcellular location is the chloroplast thylakoid membrane. Functionally, may play a role in photosystem I and II biogenesis. This chain is Protein PsbN, found in Ipomoea purpurea (Common morning glory).